A 439-amino-acid polypeptide reads, in one-letter code: Ribulose bisphosphate carboxylase/oxygenase activase 2, chloroplastic (439 aa).

Residues 1–58 constitute a chloroplast transit peptide; the sequence is MATSVSTIGAANKAPLSLNNSVAGTSVPSTAFFGKTLKKVYGKGVSSPKVTNRSLRIA. 169 to 176 contributes to the ATP binding site; it reads GGKGQGKS.

It belongs to the RuBisCO activase family.

It is found in the plastid. It localises to the chloroplast stroma. Activation of RuBisCO (ribulose-1,5-bisphosphate carboxylase/oxygenase; EC 4.1.1.39) involves the ATP-dependent carboxylation of the epsilon-amino group of lysine leading to a carbamate structure. The sequence is that of Ribulose bisphosphate carboxylase/oxygenase activase 2, chloroplastic (RCA) from Nicotiana tabacum (Common tobacco).